A 471-amino-acid chain; its full sequence is Glutamyl-tRNA(Gln) amidotransferase subunit A (471 aa).

Residues Lys66 and Ser141 each act as charge relay system in the active site. The Acyl-ester intermediate role is filled by Ser165.

It belongs to the amidase family. GatA subfamily. Heterotrimer of A, B and C subunits.

The enzyme catalyses L-glutamyl-tRNA(Gln) + L-glutamine + ATP + H2O = L-glutaminyl-tRNA(Gln) + L-glutamate + ADP + phosphate + H(+). Functionally, allows the formation of correctly charged Gln-tRNA(Gln) through the transamidation of misacylated Glu-tRNA(Gln) in organisms which lack glutaminyl-tRNA synthetase. The reaction takes place in the presence of glutamine and ATP through an activated gamma-phospho-Glu-tRNA(Gln). The protein is Glutamyl-tRNA(Gln) amidotransferase subunit A of Thermus thermophilus (strain ATCC BAA-163 / DSM 7039 / HB27).